Consider the following 415-residue polypeptide: Cell division control protein 11 (415 aa).

Serine 2 is modified (N-acetylserine). At serine 2 the chain carries Phosphoserine. A Basic motif motif is present at residues 12-19 (RKRKHLKR). Residues 19-298 (RGITFTVMIV…ERYRTEALSG (280 aa)) form the Septin-type G domain. The segment at 29-36 (GQSGSGRS) is G1 motif. GTP is bound by residues 29 to 36 (GQSGSGRS), glycine 92, 172 to 180 (KSDSLTRDE), glycine 230, and arginine 247. Residues 89 to 92 (DTPG) form a G3 motif region. Residues 171-174 (SKSD) are G4 motif. Serine 305 is subject to Phosphoserine. A disordered region spans residues 307-360 (RPNLTKLNGSSSSSTTTRRNTNPFKQSNNINNDVLNPASDMHGQSTGENNETYM). Over residues 316–328 (SSSSSTTTRRNTN) the composition is skewed to low complexity. Threonine 327 carries the phosphothreonine modification. Polar residues-rich tracts occupy residues 329 to 340 (PFKQSNNINNDV) and 348 to 359 (HGQSTGENNETY). Residues 354–414 (ENNETYMTRE…LEKEAKIKQE (61 aa)) are a coiled coil. A Glycyl lysine isopeptide (Lys-Gly) (interchain with G-Cter in SUMO) cross-link involves residue lysine 412.

Belongs to the TRAFAC class TrmE-Era-EngA-EngB-Septin-like GTPase superfamily. Septin GTPase family. Component of the septin complex which consists of CDC3, CDC10, CDC11, CDC12 and probably SHS1 and rearranges to a cortical collar of highly ordered filaments at the mother-bud-neck. A complex formed by CDC3, CDC10, CDC11 and CDC12 is capable of forming long filaments in vitro and the components seem to be present in a 2:2:2:2 arrangement in vivo. The filaments are proposed to be formed by the end-to-end polymerization of CDC3-CDC12-CDC11 complexes with CDC10 serving as a bridge to bundle the polymers into paired filaments. Component of the GIN4 complex composed of at least BNI5, CDC3, CDC10, CDC11, CDC12, GIN4, NAP1 and SHS1. Self-associates. Interacts with BEM4, KCC4, SPR28 and SYP1. Interacts with BNI5. Sumoylated during mitosis on the mother cell side of the bud neck. Sumoylation probably plays a central role in regulating septin ring disassembly during the cell cycle.

The protein resides in the membrane. It localises to the bud neck. Its function is as follows. Septins are GTPases involved in cytokinesis that assemble early in the cell cycle as a patch at the incipient bud site and form a ring approximate 15 minutes before bud emergence, which transforms into an hour-glass shaped collar of cortical filaments that spans both sides of the mother-bud neck. This collar persists until just before cytokinesis, when it splits into two rings that occupy opposite sides of the neck. The septins at the bud neck serve as a structural scaffold that recruits different components involved in diverse processes at specific stages during the cell cycle. Many proteins bind asymmetrically to the septin collar. The septin assembly is regulated by protein kinases GIN4 and/or CLA4. May act by recruiting MYO1 and HOF1, a protein involved in septation, to the site of cleavage. Septins are also involved in cell morphogenesis, bud site selection, chitin deposition, cell cycle regulation, cell compartmentalization and spore wall formation. CDCd11 with SHS1 11 are involved in the recruitment of BNI5 and thereby ensure efficient localization at the bud neck of MYO1, the type II myosin of the actomyosin contractile ring. In Saccharomyces cerevisiae (strain ATCC 204508 / S288c) (Baker's yeast), this protein is Cell division control protein 11.